A 2415-amino-acid chain; its full sequence is Spectrin alpha chain, erythrocytic 1 (2415 aa).

9 Spectrin repeats span residues 52-152, 157-259, 263-365, 370-471, 475-576, 580-681, 686-787, 792-894, and 898-967; these read YHYQ…SDVL, KFYQ…ESLS, DLQR…AKLK, YHRF…HQYR, DFHL…RKLL, QLLQ…GTQL, QLLQ…KKKL, KLQQ…NDLK, and QLQQ…QQQQ. Residue S257 is modified to Phosphoserine. The 60-residue stretch at 975-1034 folds into the SH3 domain; sequence GREARVIALYDFEARSRREVSMKKNDVLTLLSSINKDWWKVEADDHQGFVPAVYVRKLAP. S990 is modified (phosphoserine). Spectrin repeat units lie at residues 1085–1177, 1183–1285, 1287–1390, 1394–1489, 1499–1603, 1606–1709, 1712–1815, 1818–1921, 1924–2029, 2040–2142, and 2154–2254; these read LAYE…YQLL, VEMF…SLNE, HKFF…KMLD, ELQL…QLLT, DLKQ…KLNE, RQQR…KLKE, ALFQ…NLEE, EYLQ…SQLD, HAFQ…KLLE, LFME…QELQ, and MCQE…NLEQ. Position 1972 is a phosphoserine (S1972). EF-hand domains are found at residues 2267 to 2302, 2310 to 2345, and 2347 to 2382; these read ETLK…LNYY, EPEP…KESE, and IKTS…EQVS. The Ca(2+) site is built by D2280, N2282, T2284, R2286, E2291, D2323, Y2329, and D2334.

This sequence belongs to the spectrin family. As to quaternary structure, composed of non-homologous chains, alpha and beta, which aggregate to form dimers, tetramers, and higher polymers. Interacts with FASLG. Interacts with BCAM.

The protein localises to the cytoplasm. The protein resides in the cytoskeleton. It is found in the cell cortex. Spectrin is the major constituent of the cytoskeletal network underlying the erythrocyte plasma membrane. It associates with band 4.1 and actin to form the cytoskeletal superstructure of the erythrocyte plasma membrane. This is Spectrin alpha chain, erythrocytic 1 (Spta1) from Mus musculus (Mouse).